Reading from the N-terminus, the 269-residue chain is Ribonuclease HII (269 aa).

An RNase H type-2 domain is found at 28-222; that stretch reads RHVAGADEAG…VSGRRGAPPR (195 aa). Residues aspartate 34, glutamate 35, and aspartate 128 each coordinate a divalent metal cation.

It belongs to the RNase HII family. Mn(2+) is required as a cofactor. The cofactor is Mg(2+).

The protein localises to the cytoplasm. It catalyses the reaction Endonucleolytic cleavage to 5'-phosphomonoester.. Functionally, endonuclease that specifically degrades the RNA of RNA-DNA hybrids. This is Ribonuclease HII from Salinispora arenicola (strain CNS-205).